We begin with the raw amino-acid sequence, 118 residues long: Protein Rev (118 aa).

A phosphoserine; by host CK2 mark is found at serine 5 and serine 8. Residues 18–26 form a homomultimerization region; sequence LIKFLYQSN. Residues 23–46 form a disordered region; that stretch reads YQSNPPPSPEGTRQARRNRRRRWR. Positions 34–50 match the Nuclear localization signal and RNA-binding (RRE) motif; the sequence is TRQARRNRRRRWRARQR. Residues 36–46 are compositionally biased toward basic residues; it reads QARRNRRRRWR. Residues 73–84 carry the Nuclear export signal and binding to XPO1 motif; that stretch reads LQLPPLERLNLN. The tract at residues 87–118 is disordered; that stretch reads EDCRTSGTQGVGHPQISVESPTVLESGTEEQC. The residue at position 92 (serine 92) is a Phosphoserine; by host. Residues 103-112 show a composition bias toward polar residues; sequence SVESPTVLES.

This sequence belongs to the HIV-1 REV protein family. In terms of assembly, homomultimer; when bound to the RRE. Multimeric assembly is essential for activity and may involve XPO1. Binds to human KPNB1, XPO1, TNPO1, RANBP5 and IPO7. Interacts with the viral Integrase. Interacts with human KHDRBS1. Interacts with human NAP1; this interaction decreases Rev multimerization and stimulates its activity. Interacts with human DEAD-box helicases DDX3 and DDX24; these interactions may serve for viral RNA export to the cytoplasm and packaging, respectively. Interacts with human PSIP1; this interaction may inhibit HIV-1 DNA integration by promoting dissociation of the Integrase-LEDGF/p75 complex. Asymmetrically arginine dimethylated at one site by host PRMT6. Methylation impairs the RNA-binding activity and export of viral RNA from the nucleus to the cytoplasm. Post-translationally, phosphorylated by protein kinase CK2. Presence of, and maybe binding to the N-terminus of the regulatory beta subunit of CK2 is necessary for CK2-mediated Rev's phosphorylation.

The protein localises to the host nucleus. It is found in the host nucleolus. The protein resides in the host cytoplasm. Its function is as follows. Escorts unspliced or incompletely spliced viral pre-mRNAs (late transcripts) out of the nucleus of infected cells. These pre-mRNAs carry a recognition sequence called Rev responsive element (RRE) located in the env gene, that is not present in fully spliced viral mRNAs (early transcripts). This function is essential since most viral proteins are translated from unspliced or partially spliced pre-mRNAs which cannot exit the nucleus by the pathway used by fully processed cellular mRNAs. Rev itself is translated from a fully spliced mRNA that readily exits the nucleus. Rev's nuclear localization signal (NLS) binds directly to KPNB1/Importin beta-1 without previous binding to KPNA1/Importin alpha-1. KPNB1 binds to the GDP bound form of RAN (Ran-GDP) and targets Rev to the nucleus. In the nucleus, the conversion from Ran-GDP to Ran-GTP dissociates Rev from KPNB1 and allows Rev's binding to the RRE in viral pre-mRNAs. Rev multimerization on the RRE via cooperative assembly exposes its nuclear export signal (NES) to the surface. Rev can then form a complex with XPO1/CRM1 and Ran-GTP, leading to nuclear export of the complex. Conversion from Ran-GTP to Ran-GDP mediates dissociation of the Rev/RRE/XPO1/RAN complex, so that Rev can return to the nucleus for a subsequent round of export. Beside KPNB1, also seems to interact with TNPO1/Transportin-1, RANBP5/IPO5 and IPO7/RANBP7 for nuclear import. The nucleoporin-like HRB/RIP is an essential cofactor that probably indirectly interacts with Rev to release HIV RNAs from the perinuclear region to the cytoplasm. The sequence is that of Protein Rev from Human immunodeficiency virus type 1 group M subtype D (isolate ELI) (HIV-1).